The chain runs to 551 residues: Arginine--tRNA ligase (551 aa).

Residues A123–R133 carry the 'HIGH' region motif.

The protein belongs to the class-I aminoacyl-tRNA synthetase family. Monomer.

The protein localises to the cytoplasm. It catalyses the reaction tRNA(Arg) + L-arginine + ATP = L-arginyl-tRNA(Arg) + AMP + diphosphate. This Chlorobaculum parvum (strain DSM 263 / NCIMB 8327) (Chlorobium vibrioforme subsp. thiosulfatophilum) protein is Arginine--tRNA ligase.